Here is a 261-residue protein sequence, read N- to C-terminus: Carnitinyl-CoA dehydratase (261 aa).

The active-site Nucleophile is the E111. E131 serves as the catalytic Proton acceptor.

This sequence belongs to the enoyl-CoA hydratase/isomerase family.

The catalysed reaction is (R)-carnitinyl-CoA = crotonobetainyl-CoA + H2O. The protein operates within amine and polyamine metabolism; carnitine metabolism. Catalyzes the reversible dehydration of L-carnitinyl-CoA to crotonobetainyl-CoA. This is Carnitinyl-CoA dehydratase from Shigella flexneri.